The primary structure comprises 482 residues: Probable glycine dehydrogenase (decarboxylating) subunit 2 (482 aa).

N6-(pyridoxal phosphate)lysine is present on Lys-264.

This sequence belongs to the GcvP family. C-terminal subunit subfamily. The glycine cleavage system is composed of four proteins: P, T, L and H. In this organism, the P 'protein' is a heterodimer of two subunits. It depends on pyridoxal 5'-phosphate as a cofactor.

It catalyses the reaction N(6)-[(R)-lipoyl]-L-lysyl-[glycine-cleavage complex H protein] + glycine + H(+) = N(6)-[(R)-S(8)-aminomethyldihydrolipoyl]-L-lysyl-[glycine-cleavage complex H protein] + CO2. The glycine cleavage system catalyzes the degradation of glycine. The P protein binds the alpha-amino group of glycine through its pyridoxal phosphate cofactor; CO(2) is released and the remaining methylamine moiety is then transferred to the lipoamide cofactor of the H protein. The polypeptide is Probable glycine dehydrogenase (decarboxylating) subunit 2 (Treponema denticola (strain ATCC 35405 / DSM 14222 / CIP 103919 / JCM 8153 / KCTC 15104)).